The primary structure comprises 312 residues: Olfactory receptor 6N1 (312 aa).

Over 1 to 25 (MDTGNWSQVAEFIILGFPHLQGVQI) the chain is Extracellular. N-linked (GlcNAc...) asparagine glycosylation is present at Asn5. Residues 26 to 46 (YLFLLLLLIYLMTVLGNLLIF) traverse the membrane as a helical segment. At 47 to 54 (LVVCLDSR) the chain is on the cytoplasmic side. A helical membrane pass occupies residues 55–75 (LHTPMYHFVSILSFSELGYTA). Over 76–99 (ATIPKMLANLLSEKKTISFSGCLL) the chain is Extracellular. Cys97 and Cys189 are oxidised to a cystine. The helical transmembrane segment at 100–120 (QIYFFHSLGATECYLLTAMAY) threads the bilayer. The Cytoplasmic portion of the chain corresponds to 121 to 139 (DRYLAICRPLHYPTLMTPT). A helical membrane pass occupies residues 140-160 (LCAEIAIGCWLGGLAGPVVEI). Residues 161–197 (SLISRLPFCGPNRIQHVFCDFPPVLSLACTDTSINVL) are Extracellular-facing. The chain crosses the membrane as a helical span at residues 198–217 (VDFVINSCKILATFLLILCS). The Cytoplasmic portion of the chain corresponds to 218 to 237 (YVQIICTVLRIPSAAGKRKA). Residues 238-258 (ISTCASHFTVVLIFYGSILSM) traverse the membrane as a helical segment. Topologically, residues 259–271 (YVQLKKSYSLDYD) are extracellular. The helical transmembrane segment at 272–292 (QALAVVYSVLTPFLNPFIYSL) threads the bilayer. Residues 293–312 (RNKEIKEAVRRQLKRIGILA) are Cytoplasmic-facing.

It belongs to the G-protein coupled receptor 1 family.

The protein resides in the cell membrane. Its function is as follows. Odorant receptor. In Homo sapiens (Human), this protein is Olfactory receptor 6N1 (OR6N1).